The primary structure comprises 139 residues: D-ribose pyranase (139 aa).

His20 serves as the catalytic Proton donor. Substrate-binding positions include Asp28, His106, and Tyr128 to Asn130.

This sequence belongs to the RbsD / FucU family. RbsD subfamily. Homodecamer.

It is found in the cytoplasm. The catalysed reaction is beta-D-ribopyranose = beta-D-ribofuranose. The protein operates within carbohydrate metabolism; D-ribose degradation; D-ribose 5-phosphate from beta-D-ribopyranose: step 1/2. Functionally, catalyzes the interconversion of beta-pyran and beta-furan forms of D-ribose. The chain is D-ribose pyranase from Aeromonas salmonicida (strain A449).